Reading from the N-terminus, the 328-residue chain is Malate dehydrogenase (328 aa).

NAD(+) is bound at residue 13–19 (GAAGQIS). Residues R94 and R100 each contribute to the substrate site. Residues N107, Q114, and 131–133 (VGN) contribute to the NAD(+) site. Residues N133 and R164 each coordinate substrate. Catalysis depends on H189, which acts as the Proton acceptor.

It belongs to the LDH/MDH superfamily. MDH type 2 family.

The enzyme catalyses (S)-malate + NAD(+) = oxaloacetate + NADH + H(+). Catalyzes the reversible oxidation of malate to oxaloacetate. The sequence is that of Malate dehydrogenase from Alcanivorax borkumensis (strain ATCC 700651 / DSM 11573 / NCIMB 13689 / SK2).